We begin with the raw amino-acid sequence, 1098 residues long: Ubiquitin carboxyl-terminal hydrolase 36 (1098 aa).

Residues 72–86 (RHRSGDELQARKPGT) show a composition bias toward basic and acidic residues. Positions 72-97 (RHRSGDELQARKPGTERVSGSGGDGV) are disordered. One can recognise a USP domain in the interval 122–423 (AGLHNLGNTC…QAYVLFYLRI (302 aa)). C131 serves as the catalytic Nucleophile. Catalysis depends on H382, which acts as the Proton acceptor. Disordered regions lie at residues 428 to 464 (KSPE…VPSP) and 483 to 574 (EVGV…RDTI). A phosphoserine mark is found at S429, S463, S547, and S578. Low complexity predominate over residues 540–558 (PLQSLTTSPTTSQGSPGTG). The segment at 589-640 (GHRLKGEGSGVDLEKGDSSSSSPEHSASSDPAKAPQTAESRAAHACDSQGTN) is disordered. Over residues 606–617 (SSSSSPEHSASS) the composition is skewed to low complexity. Phosphoserine is present on S663. 2 disordered regions span residues 664–710 (PALS…SPSA) and 722–973 (HPVV…ALSV). Over residues 665-677 (ALSSTTTEPTSLM) the composition is skewed to polar residues. S678 bears the Phosphoserine mark. Residues 683–692 (KKLALSAKKA) show a composition bias toward low complexity. Residue S709 is modified to Phosphoserine. Low complexity predominate over residues 746 to 763 (HPHSASLSSSSAKPLGTS). Positions 853-878 (GQFQDQSWSSGSQKEEGTQPQVNGHQ) are enriched in polar residues. The segment covering 889 to 898 (SSRKRRKRKR) has biased composition (basic residues). Polar residues predominate over residues 901-917 (GLSQEATPSQDLIQHSC). The span at 921-932 (DHSEPEARTELQ) shows a compositional bias: basic and acidic residues. Positions 933-943 (KKKKKKRRKRK) are enriched in basic residues. Basic and acidic residues predominate over residues 944–960 (PEPQQDEESKHPGDQRS).

This sequence belongs to the peptidase C19 family. In terms of assembly, interacts with isoform 3 of FBXW7; the interaction inhibits MYC degradation induced by SCF(FBW7) complex. Interacts with NTRK1; USP36 does not deubiquitinate NTRK1. Interacts with NEDD4L (via domains WW1, 3 and 4); the interaction inhibits ubiquitination of, at least, NTRK1, KCNQ2 and KCNQ3 by NEDD4L. Interacts (via C-terminus) with EXOSC10 (via C-terminus); the interaction is facilitated by the association with RNA and promotes sumoylation of EXOSC10. In terms of processing, polyubiquitinated by NEDD4L, no effect on USP36 protein levels. Both proteins interact with and regulate each other's ubiquitination levels.

It is found in the nucleus. The protein resides in the nucleolus. Its subcellular location is the cytoplasm. It catalyses the reaction Thiol-dependent hydrolysis of ester, thioester, amide, peptide and isopeptide bonds formed by the C-terminal Gly of ubiquitin (a 76-residue protein attached to proteins as an intracellular targeting signal).. In terms of biological role, deubiquitinase essential for the regulation of nucleolar structure and function. Required for cell and organism viability. Plays an important role in ribosomal RNA processing and protein synthesis, which is mediated, at least in part, through deubiquitination of DHX33, NPM1 and FBL, regulating their protein stability. Functions as a transcriptional repressor by deubiquiting histone H2B at the promoters of genes critical for cellular differentiation, such as CDKN1A, thereby preventing histone H3 'Lys-4' trimethylation (H3K4). Specifically deubiquitinates MYC in the nucleolus, leading to prevent MYC degradation by the proteasome: acts by specifically interacting with isoform 3 of FBXW7 (FBW7gamma) in the nucleolus and counteracting ubiquitination of MYC by the SCF(FBW7) complex. In contrast, it does not interact with isoform 1 of FBXW7 (FBW7alpha) in the nucleoplasm. Interacts to and regulates the actions of E3 ubiquitin-protein ligase NEDD4L over substrates such as NTRK1, KCNQ2 and KCNQ3, affecting their expression an functions. Deubiquitinates SOD2, regulates SOD2 protein stability. Deubiquitinase activity is required to control selective autophagy activation by ubiquitinated proteins. Promotes CEP63 stabilization through 'Lys-48'-linked deubiquitination leading to increased stability. Acts as a SUMO ligase to promote EXOSC10 sumoylation critical for the nucleolar RNA exosome function in rRNA processing. Binds to pre-rRNAs. The sequence is that of Ubiquitin carboxyl-terminal hydrolase 36 (Usp36) from Mus musculus (Mouse).